Reading from the N-terminus, the 471-residue chain is 3-isopropylmalate dehydratase large subunit (471 aa).

Cys347, Cys407, and Cys410 together coordinate [4Fe-4S] cluster.

It belongs to the aconitase/IPM isomerase family. LeuC type 1 subfamily. As to quaternary structure, heterodimer of LeuC and LeuD. Requires [4Fe-4S] cluster as cofactor.

The enzyme catalyses (2R,3S)-3-isopropylmalate = (2S)-2-isopropylmalate. It functions in the pathway amino-acid biosynthesis; L-leucine biosynthesis; L-leucine from 3-methyl-2-oxobutanoate: step 2/4. Its function is as follows. Catalyzes the isomerization between 2-isopropylmalate and 3-isopropylmalate, via the formation of 2-isopropylmaleate. The chain is 3-isopropylmalate dehydratase large subunit from Geobacillus sp. (strain WCH70).